The primary structure comprises 890 residues: Potassium/sodium hyperpolarization-activated cyclic nucleotide-gated channel 1 (890 aa).

A disordered region spans residues M1–F93. Topologically, residues M1–R142 are cytoplasmic. Low complexity predominate over residues N8 to A34. The span at D62–P77 shows a compositional bias: gly residues. A helical transmembrane segment spans residues F143–I164. Residues T165–T173 lie on the Extracellular side of the membrane. Residues P174–F194 form a helical membrane-spanning segment. The Cytoplasmic portion of the chain corresponds to R195–M215. Residues N216–F236 form a helical membrane-spanning segment. At L237–T260 the chain is on the extracellular side. Residues K261–W281 form a helical; Voltage-sensor membrane-spanning segment. The Cytoplasmic portion of the chain corresponds to E282–V295. Residues V296–L318 form a helical membrane-spanning segment. Topologically, residues V319–Q344 are extracellular. Residue N338 is glycosylated (N-linked (GlcNAc...) asparagine). An intramembrane region (pore-forming) is located at residues Y345–P366. Residues C358 to G362 carry the Selectivity filter motif. Residues V367 to D371 lie on the Extracellular side of the membrane. The helical transmembrane segment at L372–H392 threads the bilayer. Topologically, residues A393–L890 are cytoplasmic. Residues G539, E540, C542, R549, T550, R590, and R593 each contribute to the 3',5'-cyclic AMP site. Composition is skewed to low complexity over residues M644–S691 and Q731–Q749. 3 disordered regions span residues M644–A692, S725–E796, and M845–L890. The span at S770–T780 shows a compositional bias: polar residues. The span at R854 to A865 shows a compositional bias: pro residues. Positions D880 to L890 are enriched in basic and acidic residues.

It belongs to the potassium channel HCN family. In terms of assembly, homotetramer. Heterotetramer with HCN2. The potassium channel is composed of a homo- or heterotetrameric complex of pore-forming subunits. Interacts with KCNE2. Interacts with the SH3 domain of CSK. As to expression, detected in brain, in particular in amygdala and hippocampus, while expression in caudate nucleus, corpus callosum, substantia nigra, subthalamic nucleus and thalamus is very low or not detectable. Detected at very low levels in muscle and pancreas.

It localises to the cell membrane. The catalysed reaction is Na(+)(in) = Na(+)(out). It catalyses the reaction K(+)(in) = K(+)(out). Its activity is regulated as follows. Activated by cAMP, and at 10-100 times higher concentrations, also by cGMP. cAMP binding promotes tetramerization and formation of an active channel. Compared to other family members, cAMP has less stimulatory effect on HCN1 because part of the molecules already contain bound cAMP and form homotetramers when cAMP levels are low, this inherent tetramerization in HCN1 results in a weaker response to increased cAMP. Inhibited by Cs(1+), zatebradine, capsazepine and ZD7288. Functionally, hyperpolarization-activated ion channel that are permeable to sodium and potassium ions. Displays lower selectivity for K(+) over Na(+) ions. Contributes to the native pacemaker currents in heart (If) and in the generation of the I(h) current which controls neuron excitability. Participates in cerebellar mechanisms of motor learning. May mediate responses to sour stimuli. This chain is Potassium/sodium hyperpolarization-activated cyclic nucleotide-gated channel 1 (HCN1), found in Homo sapiens (Human).